A 214-amino-acid polypeptide reads, in one-letter code: NADH-quinone oxidoreductase subunit C (214 aa).

The protein belongs to the complex I 30 kDa subunit family. NDH-1 is composed of 14 different subunits. Subunits NuoB, C, D, E, F, and G constitute the peripheral sector of the complex.

The protein resides in the cell inner membrane. It carries out the reaction a quinone + NADH + 5 H(+)(in) = a quinol + NAD(+) + 4 H(+)(out). Its function is as follows. NDH-1 shuttles electrons from NADH, via FMN and iron-sulfur (Fe-S) centers, to quinones in the respiratory chain. The immediate electron acceptor for the enzyme in this species is believed to be ubiquinone. Couples the redox reaction to proton translocation (for every two electrons transferred, four hydrogen ions are translocated across the cytoplasmic membrane), and thus conserves the redox energy in a proton gradient. The protein is NADH-quinone oxidoreductase subunit C of Francisella tularensis subsp. holarctica (strain LVS).